Here is a 510-residue protein sequence, read N- to C-terminus: 2,3-bisphosphoglycerate-independent phosphoglycerate mutase (510 aa).

Mn(2+) is bound by residues Asp14 and Ser64. Residue Ser64 is the Phosphoserine intermediate of the active site. Residues His125, 155–156 (RD), Arg187, Arg193, 259–262 (RADR), and Lys332 each bind substrate. Mn(2+) contacts are provided by Asp399, His403, Asp440, His441, and His459.

It belongs to the BPG-independent phosphoglycerate mutase family. Monomer. Mn(2+) is required as a cofactor.

It catalyses the reaction (2R)-2-phosphoglycerate = (2R)-3-phosphoglycerate. The protein operates within carbohydrate degradation; glycolysis; pyruvate from D-glyceraldehyde 3-phosphate: step 3/5. Its function is as follows. Catalyzes the interconversion of 2-phosphoglycerate and 3-phosphoglycerate. This Pseudomonas syringae pv. syringae (strain B728a) protein is 2,3-bisphosphoglycerate-independent phosphoglycerate mutase.